Here is a 652-residue protein sequence, read N- to C-terminus: 1,4-alpha-glucan branching enzyme GlgB (652 aa).

The Nucleophile role is filled by Asp322. Glu373 serves as the catalytic Proton donor.

Belongs to the glycosyl hydrolase 13 family. GlgB subfamily. Monomer.

The catalysed reaction is Transfers a segment of a (1-&gt;4)-alpha-D-glucan chain to a primary hydroxy group in a similar glucan chain.. Its pathway is glycan biosynthesis; glycogen biosynthesis. In terms of biological role, catalyzes the formation of the alpha-1,6-glucosidic linkages in glycogen by scission of a 1,4-alpha-linked oligosaccharide from growing alpha-1,4-glucan chains and the subsequent attachment of the oligosaccharide to the alpha-1,6 position. This chain is 1,4-alpha-glucan branching enzyme GlgB, found in Deinococcus geothermalis (strain DSM 11300 / CIP 105573 / AG-3a).